The following is a 504-amino-acid chain: GTPase Der (504 aa).

An EngA-type G 1 domain is found at 3 to 166; that stretch reads PVVALVGRPN…QVLAPLAEKL (164 aa). Residues 9–16, 56–60, and 118–121 each bind GTP; these read GRPNVGKS, DTGGI, and NKTD. The disordered stretch occupies residues 171–190; the sequence is VDSDENVADDEQDEWDSDFD. The span at 172–190 shows a compositional bias: acidic residues; sequence DSDENVADDEQDEWDSDFD. In terms of domain architecture, EngA-type G 2 spans 216–389; the sequence is IKIAIVGRPN…SIQEAYQCAT (174 aa). GTP contacts are provided by residues 222–229, 269–273, and 334–337; these read GRPNVGKS, DTAGV, and NKWD. The region spanning 390-474 is the KH-like domain; the sequence is KKMTTSMLTR…PIRVLFQEGN (85 aa).

Belongs to the TRAFAC class TrmE-Era-EngA-EngB-Septin-like GTPase superfamily. EngA (Der) GTPase family. As to quaternary structure, associates with the 50S ribosomal subunit.

Its function is as follows. GTPase that plays an essential role in the late steps of ribosome biogenesis. This is GTPase Der from Glaesserella parasuis serovar 5 (strain SH0165) (Haemophilus parasuis).